Consider the following 236-residue polypeptide: Phosphoribosylaminoimidazole-succinocarboxamide synthase (236 aa).

This sequence belongs to the SAICAR synthetase family.

The enzyme catalyses 5-amino-1-(5-phospho-D-ribosyl)imidazole-4-carboxylate + L-aspartate + ATP = (2S)-2-[5-amino-1-(5-phospho-beta-D-ribosyl)imidazole-4-carboxamido]succinate + ADP + phosphate + 2 H(+). Its pathway is purine metabolism; IMP biosynthesis via de novo pathway; 5-amino-1-(5-phospho-D-ribosyl)imidazole-4-carboxamide from 5-amino-1-(5-phospho-D-ribosyl)imidazole-4-carboxylate: step 1/2. The protein is Phosphoribosylaminoimidazole-succinocarboxamide synthase of Campylobacter jejuni subsp. jejuni serotype O:6 (strain 81116 / NCTC 11828).